The chain runs to 91 residues: Small ribosomal subunit protein bS16 (91 aa).

The protein belongs to the bacterial ribosomal protein bS16 family.

This is Small ribosomal subunit protein bS16 from Ligilactobacillus salivarius (strain UCC118) (Lactobacillus salivarius).